The chain runs to 401 residues: Protein KlcB (401 aa).

The interval 253–311 is disordered; that stretch reads AARSNAKGKAGGRERDPASAETAMRCSTAKADDCKAEAGPVSPEATMPGAGEASCSTAR.

The polypeptide is Protein KlcB (klcB) (Escherichia coli).